A 433-amino-acid polypeptide reads, in one-letter code: Lipase 2 (433 aa).

An Involved in the stabilization of the negatively charged intermediate by the formation of the oxyanion hole motif is present at residues 165-167 (HGG). Catalysis depends on S239, which acts as the Charge relay system. Residues D361 and H391 contribute to the active site.

The protein belongs to the 'GDXG' lipolytic enzyme family.

It catalyses the reaction a triacylglycerol + H2O = a diacylglycerol + a fatty acid + H(+). This Moraxella sp. (strain TA144) protein is Lipase 2 (lip2).